The sequence spans 368 residues: UDP-N-acetylenolpyruvoylglucosamine reductase (368 aa).

An FAD-binding PCMH-type domain is found at 32–199 (IGGKPRSAVR…LAIELQLLTD (168 aa)). Arg-177 is an active-site residue. Ser-257 acts as the Proton donor in catalysis. Residue Glu-358 is part of the active site.

It belongs to the MurB family. FAD is required as a cofactor.

The protein resides in the cytoplasm. It carries out the reaction UDP-N-acetyl-alpha-D-muramate + NADP(+) = UDP-N-acetyl-3-O-(1-carboxyvinyl)-alpha-D-glucosamine + NADPH + H(+). The protein operates within cell wall biogenesis; peptidoglycan biosynthesis. Its function is as follows. Cell wall formation. The sequence is that of UDP-N-acetylenolpyruvoylglucosamine reductase from Corynebacterium glutamicum (strain R).